Here is a 701-residue protein sequence, read N- to C-terminus: Probable cytosolic oligopeptidase A (701 aa).

Ala2 is subject to N-acetylalanine. The stretch at 148-194 forms a coiled coil; the sequence is IALEDDKREEFNKIEQELEKLSHKFSENVLDATKKFEKLITDKKEIE. His483 provides a ligand contact to Zn(2+). Glu484 is a catalytic residue. Residues His487 and Glu513 each coordinate Zn(2+). 615–621 contributes to the substrate binding site; that stretch reads HIFAGGY.

This sequence belongs to the peptidase M3 family. Requires Zn(2+) as cofactor.

Its subcellular location is the cytoplasm. The protein localises to the cytosol. The catalysed reaction is Hydrolysis of oligopeptides, with broad specificity. Gly or Ala commonly occur as P1 or P1' residues, but more distant residues are also important, as is shown by the fact that Z-Gly-Pro-Gly-|-Gly-Pro-Ala is cleaved, but not Z-(Gly)(5).. With respect to regulation, inhibited by salicylic acid. Oligopeptidase that may be involved in the degradation of proteasome-generated peptides. Binds salicylic acid. The polypeptide is Probable cytosolic oligopeptidase A (Arabidopsis thaliana (Mouse-ear cress)).